The primary structure comprises 400 residues: 1-deoxy-D-xylulose 5-phosphate reductoisomerase (400 aa).

Threonine 10, glycine 11, serine 12, isoleucine 13, glycine 36, asparagine 38, and asparagine 124 together coordinate NADPH. Lysine 125 provides a ligand contact to 1-deoxy-D-xylulose 5-phosphate. Glutamate 126 is an NADPH binding site. Aspartate 150 provides a ligand contact to Mn(2+). Serine 151, glutamate 152, serine 186, and histidine 209 together coordinate 1-deoxy-D-xylulose 5-phosphate. Glutamate 152 is a binding site for Mn(2+). An NADPH-binding site is contributed by glycine 215. Serine 222, asparagine 227, lysine 228, and glutamate 231 together coordinate 1-deoxy-D-xylulose 5-phosphate. Position 231 (glutamate 231) interacts with Mn(2+).

It belongs to the DXR family. The cofactor is Mg(2+). It depends on Mn(2+) as a cofactor.

The catalysed reaction is 2-C-methyl-D-erythritol 4-phosphate + NADP(+) = 1-deoxy-D-xylulose 5-phosphate + NADPH + H(+). Its pathway is isoprenoid biosynthesis; isopentenyl diphosphate biosynthesis via DXP pathway; isopentenyl diphosphate from 1-deoxy-D-xylulose 5-phosphate: step 1/6. Catalyzes the NADPH-dependent rearrangement and reduction of 1-deoxy-D-xylulose-5-phosphate (DXP) to 2-C-methyl-D-erythritol 4-phosphate (MEP). This is 1-deoxy-D-xylulose 5-phosphate reductoisomerase from Aliivibrio fischeri (strain MJ11) (Vibrio fischeri).